The chain runs to 276 residues: Undecaprenyl-diphosphatase (276 aa).

5 consecutive transmembrane segments (helical) span residues 84-104, 115-135, 188-208, 222-242, and 250-270; these read YRLGWYVIIGTIPICILGLFF, LWVVVTALVVFSGVIALAEYV, FGFLLAIPAVFASGLFSLPDA, QLLVATLIAFVLGLTAVAWLL, and MYWFVGYRVLVGTGMLVLLAT.

This sequence belongs to the UppP family.

Its subcellular location is the cell membrane. The enzyme catalyses di-trans,octa-cis-undecaprenyl diphosphate + H2O = di-trans,octa-cis-undecaprenyl phosphate + phosphate + H(+). Its function is as follows. Catalyzes the dephosphorylation of undecaprenyl diphosphate (UPP). Confers resistance to bacitracin. The protein is Undecaprenyl-diphosphatase of Mycobacterium tuberculosis (strain ATCC 25177 / H37Ra).